Consider the following 77-residue polypeptide: UPF0291 protein YnzC (77 aa).

Residues 56–77 (DPEGNDVTPEKLKREQRNNKLH) form a disordered region. Residues 63 to 77 (TPEKLKREQRNNKLH) show a composition bias toward basic and acidic residues.

This sequence belongs to the UPF0291 family.

Its subcellular location is the cytoplasm. This Bacillus subtilis (strain 168) protein is UPF0291 protein YnzC (ynzC).